Here is a 786-residue protein sequence, read N- to C-terminus: von Willebrand factor A domain-containing protein 5A (786 aa).

Positions 1–131 (MVHFCGLLTL…KAAVTLKYVQ (131 aa)) constitute a VIT domain. The 182-residue stretch at 281–462 (EFIFLMDRSG…KALRTLKRSL (182 aa)) folds into the VWFA domain.

As to expression, expressed at low level in many tissues. Not expressed in 80% of tumor cell lines tested.

In terms of biological role, may play a role in tumorigenesis as a tumor suppressor. Altered expression of this protein and disruption of the molecular pathway it is involved in, may contribute directly to or modify tumorigenesis. The protein is von Willebrand factor A domain-containing protein 5A (VWA5A) of Homo sapiens (Human).